The chain runs to 207 residues: Vexin (207 aa).

The tract at residues 55–102 (LELLPHRGDRRDPGDGRRFGRLQTARPPTAHPAKASARPVGISEPKTS) is disordered. The segment covering 58 to 72 (LPHRGDRRDPGDGRR) has biased composition (basic and acidic residues).

It belongs to the vexin family.

It is found in the cell membrane. The protein resides in the nucleus. Required for neurogenesis in the neural plate and retina. Strongly cooperates with neural bHLH factors to promote neurogenesis. The polypeptide is Vexin (Pongo abelii (Sumatran orangutan)).